A 495-amino-acid chain; its full sequence is BUB3-interacting and GLEBS motif-containing protein ZNF207 (495 aa).

Residues Met1–Glu92 form a microtubule-binding region region. 2 consecutive C2H2-type zinc fingers follow at residues Pro11–His34 and Phe35–His58. The segment covering Gln99–Asp111 has biased composition (basic and acidic residues). Disordered stretches follow at residues Gln99 to Pro161, Pro252 to Glu292, and Val316 to Thr372. Residues Asp112–Ser121 show a composition bias toward acidic residues. Over residues Phe127–Gln136 the composition is skewed to polar residues. Pro residues predominate over residues Met142 to Pro161. 2 stretches are compositionally biased toward low complexity: residues Ser283–Glu292 and Thr326–Thr372. The tract at residues Ala376–Gln408 is GLEBS. The segment at Pro462–Tyr495 is disordered. Over residues Gly464–Met484 the composition is skewed to pro residues.

In terms of assembly, interacts (via GLEBS region) with BUB3. In terms of tissue distribution, in day-13 embryo, strongly expressed in the nervous system (brain, spinal cord and dorsal root ganglia), with strong to weak expression in other regions. Continues to be strongly expressed in the neonatal brain while expression is weak in the brain and spinal cord of adult.

The protein localises to the nucleus. It localises to the chromosome. Its subcellular location is the centromere. It is found in the kinetochore. The protein resides in the cytoplasm. The protein localises to the cytoskeleton. It localises to the spindle. In terms of biological role, kinetochore- and microtubule-binding protein that plays a key role in spindle assembly. ZNF207/BuGZ is mainly composed of disordered low-complexity regions and undergoes phase transition or coacervation to form temperature-dependent liquid droplets. Coacervation promotes microtubule bundling and concentrates tubulin, promoting microtubule polymerization and assembly of spindle and spindle matrix by concentrating its building blocks. Also acts as a regulator of mitotic chromosome alignment by mediating the stability and kinetochore loading of BUB3. Mechanisms by which BUB3 is protected are unclear: according to a first report, ZNF207/BuGZ may act by blocking ubiquitination and proteasomal degradation of BUB3. According to another report, the stabilization is independent of the proteasome. The protein is BUB3-interacting and GLEBS motif-containing protein ZNF207 of Mus musculus (Mouse).